We begin with the raw amino-acid sequence, 501 residues long: MPDAVGAIDQGTTSTRFIVFDRRGTIRAQAQREHEQIFPRPGWVEHDPREIWRNTHAVMREGLARAGLVPGDLAAIGLTNQRETALLWDRRTGEPLHNALVWQDTRTDRTVAALARDGGRDRFRAVTGLPLASYFSASKLAWLLDHVEGARAKAEDGTALFGTIDSWLVWNLTGGPDGGLHVTDVTNASRTQLMSLATLDWDEAMLGVFRIPRAVLPEIVSSSAVLGETRDPFPGVPVGGILGDQQAALFGQTCFAPGEAKNTYGTGCFALMNTGPEPVASTAGLVTTVAYRLDGRPPAYALEGSIAITGALVQWLRDNLGLIGASSEIEGLARSVEDNGGVYVVPAFSGLYAPHWRDDARGLIIGLTRYANKGHIARACLEATAYQTREVLEAMERDSGCPLSELRCDGGMTVNDLLMQFQADILDRPTLRPKVSETTALGAAYAAGLATGFWKTLEDLRDNWAVDKRWHPHIAAEERRALFAGWGRAVERSFGWVEENA.

Thr-12 provides a ligand contact to ADP. ATP is bound by residues Thr-12, Thr-13, and Ser-14. Thr-12 contacts sn-glycerol 3-phosphate. Arg-16 is an ADP binding site. Residues Arg-82, Glu-83, Tyr-134, and Asp-244 each contribute to the sn-glycerol 3-phosphate site. Positions 82, 83, 134, 244, and 245 each coordinate glycerol. Residues Thr-266 and Gly-310 each coordinate ADP. Thr-266, Gly-310, Gln-314, and Gly-411 together coordinate ATP. Residues Gly-411 and Asn-415 each contribute to the ADP site.

Belongs to the FGGY kinase family.

It catalyses the reaction glycerol + ATP = sn-glycerol 3-phosphate + ADP + H(+). It participates in polyol metabolism; glycerol degradation via glycerol kinase pathway; sn-glycerol 3-phosphate from glycerol: step 1/1. With respect to regulation, inhibited by fructose 1,6-bisphosphate (FBP). In terms of biological role, key enzyme in the regulation of glycerol uptake and metabolism. Catalyzes the phosphorylation of glycerol to yield sn-glycerol 3-phosphate. This is Glycerol kinase from Methylorubrum populi (strain ATCC BAA-705 / NCIMB 13946 / BJ001) (Methylobacterium populi).